Reading from the N-terminus, the 396-residue chain is Lipid-A-disaccharide synthase (396 aa).

This sequence belongs to the LpxB family.

The enzyme catalyses a lipid X + a UDP-2-N,3-O-bis[(3R)-3-hydroxyacyl]-alpha-D-glucosamine = a lipid A disaccharide + UDP + H(+). The protein operates within bacterial outer membrane biogenesis; LPS lipid A biosynthesis. In terms of biological role, condensation of UDP-2,3-diacylglucosamine and 2,3-diacylglucosamine-1-phosphate to form lipid A disaccharide, a precursor of lipid A, a phosphorylated glycolipid that anchors the lipopolysaccharide to the outer membrane of the cell. This Hahella chejuensis (strain KCTC 2396) protein is Lipid-A-disaccharide synthase.